The sequence spans 184 residues: Probable RNA 2'-phosphotransferase (184 aa).

It belongs to the KptA/TPT1 family.

Its function is as follows. Removes the 2'-phosphate from RNA via an intermediate in which the phosphate is ADP-ribosylated by NAD followed by a presumed transesterification to release the RNA and generate ADP-ribose 1''-2''-cyclic phosphate (APPR&gt;P). May function as an ADP-ribosylase. This is Probable RNA 2'-phosphotransferase from Escherichia coli (strain K12 / MC4100 / BW2952).